The primary structure comprises 205 residues: Outer-membrane lipoprotein LolB (205 aa).

The N-terminal stretch at 1–17 is a signal peptide; that stretch reads MFLRHVIVFSFIALLAG. Residue Cys-18 is the site of N-palmitoyl cysteine attachment. The S-diacylglycerol cysteine moiety is linked to residue Cys-18.

This sequence belongs to the LolB family. As to quaternary structure, monomer.

The protein localises to the cell outer membrane. In terms of biological role, plays a critical role in the incorporation of lipoproteins in the outer membrane after they are released by the LolA protein. This chain is Outer-membrane lipoprotein LolB, found in Pseudomonas fluorescens (strain Pf0-1).